The sequence spans 250 residues: Probable dihydroorotate dehydrogenase B (NAD(+)), electron transfer subunit (250 aa).

The FAD-binding FR-type domain occupies 1–89; it reads MNRITVDQVR…RGPYGNGFQI (89 aa). 4 residues coordinate [2Fe-2S] cluster: Cys200, Cys205, Cys208, and Cys216.

This sequence belongs to the PyrK family. Heterotetramer of 2 PyrK and 2 PyrD type B subunits. [2Fe-2S] cluster serves as cofactor. Requires FAD as cofactor.

It functions in the pathway pyrimidine metabolism; UMP biosynthesis via de novo pathway; orotate from (S)-dihydroorotate (NAD(+) route): step 1/1. Its function is as follows. Responsible for channeling the electrons from the oxidation of dihydroorotate from the FMN redox center in the PyrD type B subunit to the ultimate electron acceptor NAD(+). The sequence is that of Probable dihydroorotate dehydrogenase B (NAD(+)), electron transfer subunit from Thermoplasma acidophilum (strain ATCC 25905 / DSM 1728 / JCM 9062 / NBRC 15155 / AMRC-C165).